The chain runs to 353 residues: C-C chemokine receptor type 8 (353 aa).

At 1 to 33 (MDYTMEPNVTMTDYYPDFFTAPCDAEFLLRGSM) the chain is on the extracellular side. Asparagine 8 carries N-linked (GlcNAc...) asparagine glycosylation. The helical transmembrane segment at 34-61 (LYLAILYCVLFVLGLLGNSLVILVLVGC) threads the bilayer. Residues 62-71 (KKLRSITDIY) are Cytoplasmic-facing. A helical transmembrane segment spans residues 72–91 (LLNLAASDLLFVLSIPFQTH). Topologically, residues 92–105 (NLLDQWVFGTAMCK) are extracellular. Cysteine 104 and cysteine 181 are disulfide-bonded. A helical transmembrane segment spans residues 106–127 (VVSGLYYIGFFSSMFFITLMSV). Over 128 to 144 (DRYLAIVHAVYAIKVRT) the chain is Cytoplasmic. The helical transmembrane segment at 145–169 (ASVGTALSLTVWLAAVTATIPLMVF) threads the bilayer. Residues 170 to 200 (YQVASEDGMLQCFQFYEEQSLRWKLFTHFEI) are Extracellular-facing. A helical membrane pass occupies residues 201–220 (NALGLLLPFAILLFCYVRIL). Residues 221–236 (QQLRGCLNHNRTRAIK) lie on the Cytoplasmic side of the membrane. A helical transmembrane segment spans residues 237-261 (LVLTVVIVSLLFWVPFNVALFLTSL). Residues 262–278 (HDLHILDGCATRQRLAL) are Extracellular-facing. The chain crosses the membrane as a helical span at residues 279 to 302 (AIHVTEVISFTHCCVNPVIYAFIG). The Cytoplasmic segment spans residues 303–353 (EKFKKHLMDVFQKSCSHIFLYLGRQMPVGALERQLSSNQRSSHSSTLDDIL).

The protein belongs to the G-protein coupled receptor 1 family. In terms of tissue distribution, expressed in thymus.

The protein localises to the cell membrane. Receptor for the CCL1/SCY1/TCA-3 chemokine. The sequence is that of C-C chemokine receptor type 8 (Ccr8) from Mus musculus (Mouse).